The primary structure comprises 103 residues: Putative defensin-like protein 305 (103 aa).

A signal peptide spans 1-31 (MREEILEIFLLVNFVFILCTSIMVRIRYVSC). Disulfide bonds link Cys-31–Cys-51, Cys-37–Cys-56, and Cys-42–Cys-58.

The protein belongs to the DEFL family.

The protein resides in the secreted. This Arabidopsis thaliana (Mouse-ear cress) protein is Putative defensin-like protein 305.